The chain runs to 106 residues: UPF0060 membrane protein Smed_0659 (106 aa).

3 helical membrane passes run 4-24 (FAIY…FWAW), 31-51 (GLWL…LTMV), and 61-81 (AAYG…AEGA).

Belongs to the UPF0060 family.

The protein localises to the cell inner membrane. This is UPF0060 membrane protein Smed_0659 from Sinorhizobium medicae (strain WSM419) (Ensifer medicae).